The following is a 59-amino-acid chain: Potassium channel toxin alpha-KTx 1.14 (59 aa).

Residues 1–22 form the signal peptide; the sequence is MKKISFLLLLAIVICSIGWTDG. Q23 carries the post-translational modification Pyrrolidone carboxylic acid. Cystine bridges form between C29–C50, C35–C55, and C39–C57.

This sequence belongs to the short scorpion toxin superfamily. Potassium channel inhibitor family. Alpha-KTx 01 subfamily. In terms of tissue distribution, expressed by the venom gland.

It localises to the secreted. Potent blocker of both large-conductance calcium-activated potassium channels (KCa1.1/KCNMA1) and voltage-gated potassium channels (Kv1.3/KCNA3 and ERG1/Kv11.1/KCNH2). The protein is Potassium channel toxin alpha-KTx 1.14 of Olivierus martensii (Manchurian scorpion).